The chain runs to 529 residues: GTPase Obg (529 aa).

The 158-residue stretch at 2 to 159 folds into the Obg domain; sequence ASFVDRVVLH…SDIVLELKSI (158 aa). The 184-residue stretch at 160–343 folds into the OBG-type G domain; that stretch reads ADIALVGFPS…LGFAMAEIVK (184 aa). GTP-binding positions include 166–173, 191–195, 212–215, 295–298, and 324–326; these read GFPSAGKS, FTTLI, DVPG, NKVD, and SAT. Residues serine 173 and threonine 193 each contribute to the Mg(2+) site. One can recognise an OCT domain in the interval 363 to 447; that stretch reads PRAVNETGFR…DDGVVFDWEP (85 aa). Residues 461-529 form a disordered region; sequence GTDIRFADTG…ESGLDSGDES (69 aa). Over residues 462-502 the composition is skewed to basic and acidic residues; the sequence is TDIRFADTGDRPTRSQKREEQQERRDAKAAARAELEAERKA.

The protein belongs to the TRAFAC class OBG-HflX-like GTPase superfamily. OBG GTPase family. In terms of assembly, monomer. Requires Mg(2+) as cofactor.

It is found in the cytoplasm. Functionally, an essential GTPase which binds GTP, GDP and possibly (p)ppGpp with moderate affinity, with high nucleotide exchange rates and a fairly low GTP hydrolysis rate. Plays a role in control of the cell cycle, stress response, ribosome biogenesis and in those bacteria that undergo differentiation, in morphogenesis control. This chain is GTPase Obg, found in Pseudarthrobacter chlorophenolicus (strain ATCC 700700 / DSM 12829 / CIP 107037 / JCM 12360 / KCTC 9906 / NCIMB 13794 / A6) (Arthrobacter chlorophenolicus).